We begin with the raw amino-acid sequence, 363 residues long: Probable cinnamyl alcohol dehydrogenase 6 (363 aa).

Zn(2+) is bound at residue Cys-51. An NADP(+)-binding site is contributed by Ser-53. Zn(2+) is bound by residues His-73, Glu-74, Cys-104, Cys-107, Cys-110, Cys-118, and Cys-167. Residues Ser-171, 192–197 (GLGGLG), 215–220 (SSTTGK), Thr-255, Gly-279, and 302–304 (SGI) contribute to the NADP(+) site.

It belongs to the zinc-containing alcohol dehydrogenase family. In terms of assembly, homodimer. Requires Zn(2+) as cofactor. In terms of tissue distribution, expressed in the primary and lateral roots, and root caps. Expressed in the hypocotyl, cotyledon veins and hydathodes. In stems, expressed in the vascular cambium, interfascicular cambium and developing xylem. Expressed in the style, anthers, stamen filaments, vascular tissues of sepals, stigmatic regions in flowers, and abscission and style regions of siliques.

It carries out the reaction (E)-cinnamyl alcohol + NADP(+) = (E)-cinnamaldehyde + NADPH + H(+). It catalyses the reaction (E)-coniferol + NADP(+) = (E)-coniferaldehyde + NADPH + H(+). The enzyme catalyses (E)-sinapyl alcohol + NADP(+) = (E)-sinapaldehyde + NADPH + H(+). The catalysed reaction is (E)-4-coumaroyl alcohol + NADP(+) = (E)-4-coumaraldehyde + NADPH + H(+). It carries out the reaction (E)-caffeyl alcohol + NADP(+) = (E)-caffeyl aldehyde + NADPH + H(+). It functions in the pathway aromatic compound metabolism; phenylpropanoid biosynthesis. Functionally, involved in lignin biosynthesis. Catalyzes the final step specific for the production of lignin monomers. Catalyzes the NADPH-dependent reduction of coniferaldehyde, 5-hydroxyconiferaldehyde, sinapaldehyde, 4-coumaraldehyde and caffeyl aldehyde to their respective alcohols. This chain is Probable cinnamyl alcohol dehydrogenase 6 (CAD6), found in Arabidopsis thaliana (Mouse-ear cress).